A 419-amino-acid chain; its full sequence is Histidine--tRNA ligase (419 aa).

This sequence belongs to the class-II aminoacyl-tRNA synthetase family. In terms of assembly, homodimer.

It localises to the cytoplasm. It catalyses the reaction tRNA(His) + L-histidine + ATP = L-histidyl-tRNA(His) + AMP + diphosphate + H(+). This is Histidine--tRNA ligase from Novosphingobium aromaticivorans (strain ATCC 700278 / DSM 12444 / CCUG 56034 / CIP 105152 / NBRC 16084 / F199).